The following is a 494-amino-acid chain: MVRRPCVSAAPVRVGGRLVFGFARVGSRGLCLGALLLSPRIVLAQHVADAPLGARGVVPRSSLPRRTRAARATTLRSRGGVVSSRASGGTLVVTAQKPKVMARNDVDYRPLSLQAGGRQGSLDLVATATADDASFFEANAAGSATIPRMTLAFFHTMRISDSHIDVLSFVGRAGRTGYGVSARAFYPDMSSKTTGFVGIFNVSHAFSSAYRFKGVSVGANLKVGYRHTRGGGSSQSKSSNGKENHHIVLTADVGVRGAWTVSKNFGAHEPNLWAGVAFRNIGASINATNLHGNNGAGGSGGGGGGNGDGKPAHVTDSRVILALAYQPVRYFLFGAGLEWLYNVGSIKAVNSLRYGAAFMLFPLRQLAFSSSVVMKGMGPQQVRASAGAEVQFSHVRCTASYSYLWSATPTRPHYVSIGVAGFLKPVPEQPLWQEVYRSYLRGLRHYHAQRYAEAIAEWKRTLQQGVSFEPAREGIERATKLLQLNQKVHDFNIF.

The N-terminal stretch at 1–44 (MVRRPCVSAAPVRVGGRLVFGFARVGSRGLCLGALLLSPRIVLA) is a signal peptide.

It belongs to the UPF0164 family.

The protein is UPF0164 protein TP_0859/TP_0860 of Treponema pallidum (strain Nichols).